The following is a 322-amino-acid chain: NADH-quinone oxidoreductase subunit H (322 aa).

8 consecutive transmembrane segments (helical) span residues 15–35 (ILHI…LSIL), 82–102 (IFIL…PTIP), 114–134 (IGIL…LFAG), 149–169 (ASAQ…GVIA), 186–206 (VWNV…GIAL), 243–263 (ISII…YFGF), 265–285 (GSSF…FILI), and 302–322 (WKIC…FILI).

It belongs to the complex I subunit 1 family. NDH-1 is composed of 13 different subunits. Subunits NuoA, H, J, K, L, M, N constitute the membrane sector of the complex.

The protein localises to the cell membrane. The enzyme catalyses a quinone + NADH + 5 H(+)(in) = a quinol + NAD(+) + 4 H(+)(out). Functionally, NDH-1 shuttles electrons from NADH, via FMN and iron-sulfur (Fe-S) centers, to quinones in the respiratory chain. The immediate electron acceptor for the enzyme in this species is believed to be ubiquinone. Couples the redox reaction to proton translocation (for every two electrons transferred, four hydrogen ions are translocated across the cytoplasmic membrane), and thus conserves the redox energy in a proton gradient. This subunit may bind ubiquinone. The polypeptide is NADH-quinone oxidoreductase subunit H (Buchnera aphidicola subsp. Schizaphis graminum (strain Sg)).